Here is a 233-residue protein sequence, read N- to C-terminus: Demethylmenaquinone methyltransferase (233 aa).

Residues Thr-58, Asp-79, and 106-107 (NA) contribute to the S-adenosyl-L-methionine site.

The protein belongs to the class I-like SAM-binding methyltransferase superfamily. MenG/UbiE family.

It carries out the reaction a 2-demethylmenaquinol + S-adenosyl-L-methionine = a menaquinol + S-adenosyl-L-homocysteine + H(+). Its pathway is quinol/quinone metabolism; menaquinone biosynthesis; menaquinol from 1,4-dihydroxy-2-naphthoate: step 2/2. Methyltransferase required for the conversion of demethylmenaquinol (DMKH2) to menaquinol (MKH2). In Bacillus subtilis (strain 168), this protein is Demethylmenaquinone methyltransferase.